A 262-amino-acid polypeptide reads, in one-letter code: Type III pantothenate kinase (262 aa).

Residue 6 to 13 coordinates ATP; the sequence is DVGNTNTV. Substrate contacts are provided by residues Tyr-101 and 108–111; that span reads GADR. The active-site Proton acceptor is the Asp-110. Residue Asp-130 participates in K(+) binding. An ATP-binding site is contributed by Thr-133. Position 186 (Thr-186) interacts with substrate.

Belongs to the type III pantothenate kinase family. In terms of assembly, homodimer. It depends on NH4(+) as a cofactor. Requires K(+) as cofactor.

Its subcellular location is the cytoplasm. The catalysed reaction is (R)-pantothenate + ATP = (R)-4'-phosphopantothenate + ADP + H(+). It participates in cofactor biosynthesis; coenzyme A biosynthesis; CoA from (R)-pantothenate: step 1/5. Catalyzes the phosphorylation of pantothenate (Pan), the first step in CoA biosynthesis. The protein is Type III pantothenate kinase of Desulforapulum autotrophicum (strain ATCC 43914 / DSM 3382 / VKM B-1955 / HRM2) (Desulfobacterium autotrophicum).